A 371-amino-acid chain; its full sequence is Putative glutamate--cysteine ligase 2 (371 aa).

It belongs to the glutamate--cysteine ligase type 2 family. YbdK subfamily.

It carries out the reaction L-cysteine + L-glutamate + ATP = gamma-L-glutamyl-L-cysteine + ADP + phosphate + H(+). Its function is as follows. ATP-dependent carboxylate-amine ligase which exhibits weak glutamate--cysteine ligase activity. The chain is Putative glutamate--cysteine ligase 2 from Burkholderia cenocepacia (strain HI2424).